The sequence spans 744 residues: Vesicle-fusing ATPase (744 aa).

N6-acetyllysine is present on K105. S207 bears the Phosphoserine mark. Y259 carries the post-translational modification Phosphotyrosine. Residues N505 to W510 and P545 to L552 contribute to the ATP site. T550 lines the Mg(2+) pocket. S569 bears the Phosphoserine; by CDK16 mark.

It belongs to the AAA ATPase family. As to quaternary structure, homohexamer. Interacts with GABARAP and GABARAPL2. Interacts with GRIA2. Interacts with PLK2, leading to disrupt the interaction with GRIA2. Interacts with MUSK; may regulate MUSK endocytosis and activity. Interacts with CDK16. It depends on Mg(2+) as a cofactor. Phosphorylation at Ser-569 interferes with homohexamerization.

It localises to the cytoplasm. It carries out the reaction ATP + H2O = ADP + phosphate + H(+). Required for vesicle-mediated transport. Catalyzes the fusion of transport vesicles within the Golgi cisternae. Is also required for transport from the endoplasmic reticulum to the Golgi stack. Seems to function as a fusion protein required for the delivery of cargo proteins to all compartments of the Golgi stack independent of vesicle origin. Interaction with AMPAR subunit GRIA2 leads to influence GRIA2 membrane cycling. This Cricetulus griseus (Chinese hamster) protein is Vesicle-fusing ATPase (NSF).